The chain runs to 543 residues: Bifunctional purine biosynthesis protein PurH (543 aa).

Residues 5 to 151 (NHARPIRRAL…KNHKDVTIVV (147 aa)) enclose the MGS-like domain.

This sequence belongs to the PurH family.

The catalysed reaction is (6R)-10-formyltetrahydrofolate + 5-amino-1-(5-phospho-beta-D-ribosyl)imidazole-4-carboxamide = 5-formamido-1-(5-phospho-D-ribosyl)imidazole-4-carboxamide + (6S)-5,6,7,8-tetrahydrofolate. It catalyses the reaction IMP + H2O = 5-formamido-1-(5-phospho-D-ribosyl)imidazole-4-carboxamide. It participates in purine metabolism; IMP biosynthesis via de novo pathway; 5-formamido-1-(5-phospho-D-ribosyl)imidazole-4-carboxamide from 5-amino-1-(5-phospho-D-ribosyl)imidazole-4-carboxamide (10-formyl THF route): step 1/1. The protein operates within purine metabolism; IMP biosynthesis via de novo pathway; IMP from 5-formamido-1-(5-phospho-D-ribosyl)imidazole-4-carboxamide: step 1/1. The protein is Bifunctional purine biosynthesis protein PurH of Shewanella oneidensis (strain ATCC 700550 / JCM 31522 / CIP 106686 / LMG 19005 / NCIMB 14063 / MR-1).